The chain runs to 234 residues: Leucyl/phenylalanyl-tRNA--protein transferase (234 aa).

The protein belongs to the L/F-transferase family.

Its subcellular location is the cytoplasm. It catalyses the reaction N-terminal L-lysyl-[protein] + L-leucyl-tRNA(Leu) = N-terminal L-leucyl-L-lysyl-[protein] + tRNA(Leu) + H(+). The enzyme catalyses N-terminal L-arginyl-[protein] + L-leucyl-tRNA(Leu) = N-terminal L-leucyl-L-arginyl-[protein] + tRNA(Leu) + H(+). It carries out the reaction L-phenylalanyl-tRNA(Phe) + an N-terminal L-alpha-aminoacyl-[protein] = an N-terminal L-phenylalanyl-L-alpha-aminoacyl-[protein] + tRNA(Phe). Its function is as follows. Functions in the N-end rule pathway of protein degradation where it conjugates Leu, Phe and, less efficiently, Met from aminoacyl-tRNAs to the N-termini of proteins containing an N-terminal arginine or lysine. This is Leucyl/phenylalanyl-tRNA--protein transferase from Hahella chejuensis (strain KCTC 2396).